Reading from the N-terminus, the 211-residue chain is Pyridoxine/pyridoxamine 5'-phosphate oxidase (211 aa).

Substrate is bound by residues Arg8–Tyr11 and Lys66. Residues Arg61–Lys66, Phe76–Thr77, Lys83, and Gln105 contribute to the FMN site. The substrate site is built by Tyr123, Arg127, and Ser131. FMN contacts are provided by residues Gln140–Ser141 and Trp184. Residue Arg190–His192 participates in substrate binding. Residue Arg194 coordinates FMN.

The protein belongs to the pyridoxamine 5'-phosphate oxidase family. Homodimer. The cofactor is FMN.

It carries out the reaction pyridoxamine 5'-phosphate + O2 + H2O = pyridoxal 5'-phosphate + H2O2 + NH4(+). The enzyme catalyses pyridoxine 5'-phosphate + O2 = pyridoxal 5'-phosphate + H2O2. Its pathway is cofactor metabolism; pyridoxal 5'-phosphate salvage; pyridoxal 5'-phosphate from pyridoxamine 5'-phosphate: step 1/1. It functions in the pathway cofactor metabolism; pyridoxal 5'-phosphate salvage; pyridoxal 5'-phosphate from pyridoxine 5'-phosphate: step 1/1. Functionally, catalyzes the oxidation of either pyridoxine 5'-phosphate (PNP) or pyridoxamine 5'-phosphate (PMP) into pyridoxal 5'-phosphate (PLP). The sequence is that of Pyridoxine/pyridoxamine 5'-phosphate oxidase from Mannheimia succiniciproducens (strain KCTC 0769BP / MBEL55E).